The primary structure comprises 61 residues: Conotoxin Vn5.3 (61 aa).

The N-terminal stretch at 1–19 (MHCLPVFVILLLLIASAPG) is a signal peptide. Residues 20–50 (VDVQPKTKNFMTRASLRDFAKKTPKRLSKLR) constitute a propeptide that is removed on maturation.

This sequence belongs to the conotoxin T superfamily. In terms of processing, contains 2 disulfide bonds that can be either 'C1-C3, C2-C4' or 'C1-C4, C2-C3', since these disulfide connectivities have been observed for conotoxins with cysteine framework V (for examples, see AC P0DQQ7 and AC P81755). As to expression, expressed by the venom duct.

It localises to the secreted. This chain is Conotoxin Vn5.3, found in Conus ventricosus (Mediterranean cone).